A 312-amino-acid polypeptide reads, in one-letter code: Cytochrome f (312 aa).

The signal sequence occupies residues 1–28 (MQISKFFKFVFISVSLCGSLLFPQMANA). Residues Y29, C49, C52, and H53 each coordinate heme. Residues 278-298 (VKGMIAFFFTVTVAQILLVLK) form a helical membrane-spanning segment.

It belongs to the cytochrome f family. As to quaternary structure, the 4 large subunits of the cytochrome b6-f complex are cytochrome b6, subunit IV (17 kDa polypeptide, petD), cytochrome f and the Rieske protein, while the 4 small subunits are PetG, PetL, PetM and PetN. The complex functions as a dimer. The cofactor is heme.

The protein localises to the plastid. Its subcellular location is the chloroplast thylakoid membrane. Component of the cytochrome b6-f complex, which mediates electron transfer between photosystem II (PSII) and photosystem I (PSI), cyclic electron flow around PSI, and state transitions. The chain is Cytochrome f from Emiliania huxleyi (Coccolithophore).